The chain runs to 319 residues: Thioredoxin reductase (319 aa).

36-48 (EGFMAGGVAAGGQ) contacts FAD. The cysteines at positions 144 and 147 are disulfide-linked. 289-298 (DVQDKVYRQA) lines the FAD pocket.

The protein belongs to the class-II pyridine nucleotide-disulfide oxidoreductase family. In terms of assembly, homodimer. The cofactor is FAD.

The enzyme catalyses [thioredoxin]-dithiol + NADP(+) = [thioredoxin]-disulfide + NADPH + H(+). The polypeptide is Thioredoxin reductase (trrA) (Dictyostelium discoideum (Social amoeba)).